Reading from the N-terminus, the 787-residue chain is Elongation factor G-1, chloroplastic (787 aa).

The N-terminal 86 residues, 1 to 86 (MAAESSLRVA…PRRNFSVFAM (86 aa)), are a transit peptide targeting the chloroplast. The segment covering 14–24 (LCNLNGSQRRP) has biased composition (polar residues). The interval 14–34 (LCNLNGSQRRPTTTTLSPLRF) is disordered. In terms of domain architecture, tr-type G spans 98-373 (KDYRNIGIMA…AVVDYLPSPL (276 aa)). Residues 107–114 (AHIDAGKT), 171–175 (DTPGH), and 225–228 (NKMD) contribute to the GTP site.

It belongs to the TRAFAC class translation factor GTPase superfamily. Classic translation factor GTPase family. EF-G/EF-2 subfamily.

The protein localises to the plastid. Its subcellular location is the chloroplast. It participates in protein biosynthesis; polypeptide chain elongation. Functionally, chloroplast-localized elongation factor EF-G involved in protein synthesis in plastids. Catalyzes the GTP-dependent ribosomal translocation step during translation elongation. During this step, the ribosome changes from the pre-translocational (PRE) to the post-translocational (POST) state as the newly formed A-site-bound peptidyl-tRNA and P-site-bound deacylated tRNA move to the P and E sites, respectively. Catalyzes the coordinated movement of the two tRNA molecules, the mRNA and conformational changes in the ribosome. The polypeptide is Elongation factor G-1, chloroplastic (fusA1) (Glycine max (Soybean)).